A 374-amino-acid chain; its full sequence is N5-carboxyaminoimidazole ribonucleotide synthase (374 aa).

Residues Arg-108, Lys-148, 153 to 159 (GYDGKGQ), 183 to 186 (EQFL), Glu-191, His-214, and 266 to 267 (NE) contribute to the ATP site. An ATP-grasp domain is found at 112-296 (KQTLQKAGSK…QFDTHILAVT (185 aa)).

It belongs to the PurK/PurT family. In terms of assembly, homodimer.

It catalyses the reaction 5-amino-1-(5-phospho-beta-D-ribosyl)imidazole + hydrogencarbonate + ATP = 5-carboxyamino-1-(5-phospho-D-ribosyl)imidazole + ADP + phosphate + 2 H(+). It functions in the pathway purine metabolism; IMP biosynthesis via de novo pathway; 5-amino-1-(5-phospho-D-ribosyl)imidazole-4-carboxylate from 5-amino-1-(5-phospho-D-ribosyl)imidazole (N5-CAIR route): step 1/2. In terms of biological role, catalyzes the ATP-dependent conversion of 5-aminoimidazole ribonucleotide (AIR) and HCO(3)(-) to N5-carboxyaminoimidazole ribonucleotide (N5-CAIR). The sequence is that of N5-carboxyaminoimidazole ribonucleotide synthase from Staphylococcus haemolyticus (strain JCSC1435).